We begin with the raw amino-acid sequence, 381 residues long: Terpene cyclase ATR13 (381 aa).

Belongs to the terpene synthase family.

The protein operates within mycotoxin biosynthesis. In terms of biological role, terpene cyclase; part of the core atranone cluster (CAC) which products are predicted to catalyze most or all steps of mycotoxin atranone synthesis, starting from geranylgeranyl pyrophosphate (GGPP). The initial cyclization of GGPP to dolabellane is probably performed by the terpene cyclase ATR13. The Baeyer-Villiger oxidation near the end of the atranone synthesis, which converts atranones D and E to atranones F and G is predicted to be catalyzed by the monooxygenase ATR8. Of the CAC's other predicted gene products, the reducing PKS ATR6 might synthesize a polyketide chain. This polyketide is probably transferred onto the atranone backbone by the polyketide transferase ATR5. Other predicted CAC products include 4 oxygenases (ATR2, ATR3, ATR4, and ATR14), 3 short-chain reductases (ATR7, ATR9, and ATR10), and a methyltransferase (ATR12). These may all be involved in the various steps of atranone biosynthesis, although their specific roles must await experimental determination. The polypeptide is Terpene cyclase ATR13 (Stachybotrys chlorohalonatus (strain IBT 40285)).